A 123-amino-acid chain; its full sequence is NADH-quinone oxidoreductase subunit A (123 aa).

3 helical membrane-spanning segments follow: residues 11-31, 64-84, and 93-113; these read YLPI…IMIL, ICFY…AFLV, and IGKI…IGFI.

The protein belongs to the complex I subunit 3 family. NDH-1 is composed of 14 different subunits. Subunits NuoA, H, J, K, L, M, N constitute the membrane sector of the complex.

It is found in the cell inner membrane. The enzyme catalyses a quinone + NADH + 5 H(+)(in) = a quinol + NAD(+) + 4 H(+)(out). In terms of biological role, NDH-1 shuttles electrons from NADH, via FMN and iron-sulfur (Fe-S) centers, to quinones in the respiratory chain. The immediate electron acceptor for the enzyme in this species is believed to be ubiquinone. Couples the redox reaction to proton translocation (for every two electrons transferred, four hydrogen ions are translocated across the cytoplasmic membrane), and thus conserves the redox energy in a proton gradient. The chain is NADH-quinone oxidoreductase subunit A from Rickettsia conorii (strain ATCC VR-613 / Malish 7).